We begin with the raw amino-acid sequence, 187 residues long: Elongation factor P (187 aa).

This sequence belongs to the elongation factor P family.

The protein localises to the cytoplasm. It functions in the pathway protein biosynthesis; polypeptide chain elongation. Its function is as follows. Involved in peptide bond synthesis. Stimulates efficient translation and peptide-bond synthesis on native or reconstituted 70S ribosomes in vitro. Probably functions indirectly by altering the affinity of the ribosome for aminoacyl-tRNA, thus increasing their reactivity as acceptors for peptidyl transferase. The protein is Elongation factor P of Desulfotalea psychrophila (strain LSv54 / DSM 12343).